Reading from the N-terminus, the 257-residue chain is 5'-nucleotidase SurE (257 aa).

Positions 8, 9, 40, and 92 each coordinate a divalent metal cation.

Belongs to the SurE nucleotidase family. A divalent metal cation serves as cofactor.

It is found in the cytoplasm. It carries out the reaction a ribonucleoside 5'-phosphate + H2O = a ribonucleoside + phosphate. In terms of biological role, nucleotidase that shows phosphatase activity on nucleoside 5'-monophosphates. The chain is 5'-nucleotidase SurE from Rhizobium rhizogenes (strain K84 / ATCC BAA-868) (Agrobacterium radiobacter).